Reading from the N-terminus, the 273-residue chain is MDWFLLLKGLILGIVEGLTEFLPISSTGHLILVSDLLNFNDEKGKVFTIVIQLGAILAVCWEYRVKLRHVVTDIGSRQDANRFVLNLLIAFLPAAILGLLFIKTIKQYLFHPVPVALAFIVGGLLILWAERRPHVVDVERVEDMDWKHALKVGLAQCLALIPGTSRSGATIIGGLFFGLSRKAATEFSFFLAIPVMFAATFYDLYKNRDILHLDDASVFAIGFVASFISALLAVRGLLRFVSQHDFSVFAWYRIGFGIIVLITAYSGMVQWSG.

A run of 7 helical transmembrane segments spans residues 4 to 24 (FLLLKGLILGIVEGLTEFLPI), 43 to 63 (KGKVFTIVIQLGAILAVCWEY), 83 to 103 (FVLNLLIAFLPAAILGLLFIK), 109 to 129 (LFHPVPVALAFIVGGLLILWA), 184 to 204 (ATEFSFFLAIPVMFAATFYDL), 218 to 238 (VFAIGFVASFISALLAVRGLL), and 248 to 268 (VFAWYRIGFGIIVLITAYSGM).

Belongs to the UppP family.

It localises to the cell inner membrane. It catalyses the reaction di-trans,octa-cis-undecaprenyl diphosphate + H2O = di-trans,octa-cis-undecaprenyl phosphate + phosphate + H(+). Catalyzes the dephosphorylation of undecaprenyl diphosphate (UPP). Confers resistance to bacitracin. This Nitrosospira multiformis (strain ATCC 25196 / NCIMB 11849 / C 71) protein is Undecaprenyl-diphosphatase.